A 299-amino-acid chain; its full sequence is Cuticle collagen 34 (299 aa).

The tract at residues 105–282 (PGPAGTPGKP…GSPGERGICP (178 aa)) is disordered. The segment covering 129-162 (PGRPPQQPCEPITPPPCKPCPQGPPGPPGPPGPP) has biased composition (pro residues). The segment covering 164 to 181 (DSGEPGSPGLPGQDAAPG) has biased composition (low complexity). 2 stretches are compositionally biased toward pro residues: residues 182–195 (EPGP…PGAP) and 215–233 (PGEP…PGSP). Positions 216 to 278 (GEPGPPGEAG…AGPPGSPGER (63 aa)) are triple-helical region. Low complexity predominate over residues 251–263 (NGPDGQPGADGNP). Positions 265–274 (APGPAGPPGS) are enriched in pro residues.

Belongs to the cuticular collagen family. As to quaternary structure, collagen polypeptide chains are complexed within the cuticle by disulfide bonds and other types of covalent cross-links.

Functionally, nematode cuticles are composed largely of collagen-like proteins. The cuticle functions both as an exoskeleton and as a barrier to protect the worm from its environment. In Caenorhabditis elegans, this protein is Cuticle collagen 34 (col-34).